The primary structure comprises 309 residues: Probable manganese-dependent inorganic pyrophosphatase (309 aa).

Mn(2+) is bound by residues His-9, Asp-13, Asp-15, Asp-75, His-97, and Asp-149.

Belongs to the PPase class C family. It depends on Mn(2+) as a cofactor.

It is found in the cytoplasm. The enzyme catalyses diphosphate + H2O = 2 phosphate + H(+). The chain is Probable manganese-dependent inorganic pyrophosphatase from Lactiplantibacillus plantarum (strain ATCC BAA-793 / NCIMB 8826 / WCFS1) (Lactobacillus plantarum).